The chain runs to 962 residues: Protease 3 (962 aa).

The signal sequence occupies residues 1-23 (MPRSTWFKALLLLVALWGPAVQA). Histidine 88 provides a ligand contact to Zn(2+). The active-site Proton acceptor is glutamate 91. Zn(2+)-binding residues include histidine 92 and glutamate 169.

This sequence belongs to the peptidase M16 family. In terms of assembly, monomer. Zn(2+) is required as a cofactor.

The protein resides in the periplasm. It carries out the reaction Preferential cleavage of 16-Tyr-|-Leu-17 and 25-Phe-|-Tyr-26 bonds of oxidized insulin B chain. Also acts on other substrates of Mw less than 7 kDa such as insulin and glucagon.. Endopeptidase that degrades small peptides of less than 7 kDa, such as glucagon and insulin. The chain is Protease 3 (ptrA) from Salmonella typhimurium (strain LT2 / SGSC1412 / ATCC 700720).